We begin with the raw amino-acid sequence, 244 residues long: Gasdermin-like protein rcd-1-2 (244 aa).

The tract at residues 1-22 (MDNEEWFPLKQTHYPPPTIPSM) is disordered.

It belongs to the gasdermin family. Heterooligomer; the heterooligomer with rcd-1-1 forms a ring-shaped pore complex when inserted in the membrane.

It is found in the cytoplasm. The protein resides in the cell membrane. Gasdermin-like protein involved in heterokaryon incompatibility, a process that ensures that during spontaneous vegetative cell fusion, only compatible cells from the same colony survive (non-self-recognition). In N.crassa, the rcd-1 locus exists as 2 incompatible alleles, rcd-1-1 (AC Q7SBA0) and rcd-1-2 (this entry). During the allorecognition process, forms a heterooligomer with rcd-1-1, thereby forming a functional gasdermin-like complex that binds to membranes and forms pores, triggering cell death. Binds negatively charged phospholipids, such as cardiolipin and phosphatidylserine. Also binds to phosphoinositides, preferentially to phosphatidylinositol-3-phosphate (PtdIns-3-P), PtdIns-5-P and PtdIns-3,5-P2. The chain is Gasdermin-like protein rcd-1-2 from Neurospora crassa.